Reading from the N-terminus, the 355-residue chain is Phosphoribosylformylglycinamidine cyclo-ligase (355 aa).

The protein belongs to the AIR synthase family.

The protein resides in the cytoplasm. It catalyses the reaction 2-formamido-N(1)-(5-O-phospho-beta-D-ribosyl)acetamidine + ATP = 5-amino-1-(5-phospho-beta-D-ribosyl)imidazole + ADP + phosphate + H(+). The protein operates within purine metabolism; IMP biosynthesis via de novo pathway; 5-amino-1-(5-phospho-D-ribosyl)imidazole from N(2)-formyl-N(1)-(5-phospho-D-ribosyl)glycinamide: step 2/2. The sequence is that of Phosphoribosylformylglycinamidine cyclo-ligase from Methylobacterium nodulans (strain LMG 21967 / CNCM I-2342 / ORS 2060).